The chain runs to 265 residues: Isoprenyl transferase (265 aa).

Residue D35 is part of the active site. D35 lines the Mg(2+) pocket. Substrate contacts are provided by residues 36–39 (GNGR), W40, R48, H52, and 80–82 (STE). N83 serves as the catalytic Proton acceptor. Substrate is bound by residues W84, R86, R203, and 209-211 (RIS). Residue E222 coordinates Mg(2+).

This sequence belongs to the UPP synthase family. Homodimer. Requires Mg(2+) as cofactor.

Catalyzes the condensation of isopentenyl diphosphate (IPP) with allylic pyrophosphates generating different type of terpenoids. The protein is Isoprenyl transferase of Prochlorococcus marinus (strain MIT 9313).